Reading from the N-terminus, the 322-residue chain is Mycothiol acetyltransferase (322 aa).

N-acetyltransferase domains follow at residues S5–D150 and V160–G322. Position 36 (E36) interacts with 1D-myo-inositol 2-(L-cysteinylamino)-2-deoxy-alpha-D-glucopyranoside. Residues L79 to V81 and R87 to T92 each bind acetyl-CoA. 1D-myo-inositol 2-(L-cysteinylamino)-2-deoxy-alpha-D-glucopyranoside contacts are provided by E187, K226, and E252. Acetyl-CoA is bound at residue V256–V258. Position 290 (Y290) interacts with 1D-myo-inositol 2-(L-cysteinylamino)-2-deoxy-alpha-D-glucopyranoside. N295 to R300 is a binding site for acetyl-CoA.

It belongs to the acetyltransferase family. MshD subfamily. As to quaternary structure, monomer.

It catalyses the reaction 1D-myo-inositol 2-(L-cysteinylamino)-2-deoxy-alpha-D-glucopyranoside + acetyl-CoA = mycothiol + CoA + H(+). In terms of biological role, catalyzes the transfer of acetyl from acetyl-CoA to desacetylmycothiol (Cys-GlcN-Ins) to form mycothiol. The protein is Mycothiol acetyltransferase of Parafrankia sp. (strain EAN1pec).